We begin with the raw amino-acid sequence, 266 residues long: 5'-nucleotidase SurE (266 aa).

4 residues coordinate a divalent metal cation: D8, D9, S39, and N93.

This sequence belongs to the SurE nucleotidase family. Requires a divalent metal cation as cofactor.

It is found in the cytoplasm. The catalysed reaction is a ribonucleoside 5'-phosphate + H2O = a ribonucleoside + phosphate. In terms of biological role, nucleotidase that shows phosphatase activity on nucleoside 5'-monophosphates. The polypeptide is 5'-nucleotidase SurE (Thermococcus gammatolerans (strain DSM 15229 / JCM 11827 / EJ3)).